Reading from the N-terminus, the 658-residue chain is Transmembrane 9 superfamily member 11 (658 aa).

An N-terminal signal peptide occupies residues 1–23 (MRSMDRFGIWVLAILLVIQSSFG). Residues 24 to 291 (FYLPGSYPHK…LKMEGSKVHW (268 aa)) lie on the Lumenal side of the membrane. The helical transmembrane segment at 292-312 (FSILNSLMVITFLAGIVLVIF) threads the bilayer. Topologically, residues 313–364 (LRTVRRDLTRYEELDKEAQAQMNEELSGWKLVVGDVFRAPSNASLLCVMVGD) are cytoplasmic. The chain crosses the membrane as a helical span at residues 365–385 (GVQILGMAVVTILFAALGFMS). Residues 386–391 (PASRGT) are Lumenal-facing. A helical membrane pass occupies residues 392 to 412 (LITGMLFFYMILGIAAGYVSV). Residues 413–432 (RLWRTIGCGEHRGWMSVAWK) lie on the Cytoplasmic side of the membrane. Residues 433–453 (AACFFPGIAFLILTTLNFLLW) form a helical membrane-spanning segment. At 454-462 (GSHSTGAIP) the chain is on the lumenal side. Residues 463 to 483 (FSLFVILLLLWFCISVPLTLI) form a helical membrane-spanning segment. Over 484 to 515 (GGYFGAKAPHIEFPVRTNQIPREIPAQKYPSW) the chain is Cytoplasmic. A helical membrane pass occupies residues 516-536 (LLVLGAGTLPFGTLFIELFFI). The Lumenal segment spans residues 537 to 547 (MSSIWMGRVYY). The helical transmembrane segment at 548–568 (VFGFLFVVLILLVVVCAEVSL) threads the bilayer. Over 569-586 (VLTYMHLCVEDYKWWWKS) the chain is Cytoplasmic. A helical membrane pass occupies residues 587-607 (FFASGSVAIYIFIYSINYLVF). The Lumenal segment spans residues 608–619 (DLKSLSGPVSAT). The chain crosses the membrane as a helical span at residues 620–640 (LYLGYSLFMVLAIMLATGTVG). The Cytoplasmic portion of the chain corresponds to 641 to 658 (FLSSFWFVHYLFSSVKLD). An Endoplasmic reticulum export signal motif is present at residues 647–652 (FVHYLF). The short motif at 656–658 (KLD) is the Golgi retention signal element.

It belongs to the nonaspanin (TM9SF) (TC 9.A.2) family.

The protein resides in the endosome membrane. Its subcellular location is the golgi apparatus membrane. The chain is Transmembrane 9 superfamily member 11 from Arabidopsis thaliana (Mouse-ear cress).